Reading from the N-terminus, the 192-residue chain is Small ribosomal subunit protein uS5 (192 aa).

One can recognise an S5 DRBM domain in the interval 22–85 (LVDKLVTINR…DRAKRAMIRV (64 aa)).

This sequence belongs to the universal ribosomal protein uS5 family. Part of the 30S ribosomal subunit. Contacts proteins S4 and S8.

Functionally, with S4 and S12 plays an important role in translational accuracy. Located at the back of the 30S subunit body where it stabilizes the conformation of the head with respect to the body. This chain is Small ribosomal subunit protein uS5, found in Gluconacetobacter diazotrophicus (strain ATCC 49037 / DSM 5601 / CCUG 37298 / CIP 103539 / LMG 7603 / PAl5).